The primary structure comprises 633 residues: MESGPKMLAPVCLVENNNEQLLVNQQAIQILEKISQPVVVVAIVGLYRTGKSYLMNHLAGQNHGFPLGSTVQSETKGIWMWCVPHPSKPNHTLVLLDTEGLGDVEKGDPKNDSWIFALAVLLCSTFVYNSMSTINHQALEQLHYVTELTELIKAKSSPRPDGVEDSTEFVSFFPDFLWTVRDFTLELKLNGHPITEDEYLENALKLIQGNNPRVQTSNFPRECIRRFFPKRKCFVFDRPTNDKDLLANIEKVSEKQLDPKFQEQTNIFCSYIFTHARTKTLREGITVTGNRLGTLAVTYVEAINSGAVPCLENAVITLAQRENSAAVQRAADYYSQQMAQRVKLPTDTLQELLDMHAACEREAIAIFMEHSFKDENQEFQKKFMETTMNKKGDFLLQNEESSVQYCQAKLNELSKGLMESISAGSFSVPGGHKLYMETKERIEQDYWQVPRKGVKAKEVFQRFLESQMVIEESILQSDKALTDREKAVAVDRAKKEAAEKEQELLKQKLQEQQQQMEAQDKSRKENIAQLKEKLQMEREHLLREQIMMLEHTQKVQNDWLHEGFKKKYEEMNAEISQFKRMIDTTKNDDTPWIARTLDNLADELTAILSAPAKLIGHGVKGVSSLFKKHKLPF.

Residues methionine 1–cysteine 310 form a GTPase domain (Globular) region. Positions serine 35 to arginine 277 constitute a GB1/RHD3-type G domain. Residues glycine 45–serine 52, leucine 67–serine 69, and aspartate 97–leucine 101 each bind GTP.

Belongs to the TRAFAC class dynamin-like GTPase superfamily. GB1/RHD3 GTPase family. GB1 subfamily. (Microbial infection) Ubiquitinated by S.flexneri IpaH9.8, leading to its degradation by the proteasome, thereby preventing its ability to promote host defense against bacterial infection.

It is found in the cytoplasmic vesicle. The catalysed reaction is GTP + H2O = GDP + phosphate + H(+). Interferon (IFN)-inducible GTPase that plays important roles in innate immunity against a diverse range of bacterial, viral and protozoan pathogens, such as bacterial pathogens Listeria monocytogenes and Mycobacterium bovis BCG as well as the protozoan pathogen Toxoplasma gondii. Confers protection to several pathogens, including the bacterial pathogens Listeria monocytogenes and Mycobacterium bovis BCG as well as the protozoan pathogen Toxoplasma gondii. The chain is Guanylate-binding protein 6 (GBP6) from Homo sapiens (Human).